We begin with the raw amino-acid sequence, 360 residues long: MEVSGVVLRQIPCVSSGSVAGLRLVSEFSGNTRTVGFRTRRFRGIVCNNEFADKGHVNYYIEPTRCGEEKEKVKVMEKEKKALKKKAKVLKSLSKNLDMFSSIGFGLDPEAGLVGEIQTKTISEATEILVKQLEQLKAEEKILKKQRKEEKAKAKAMKKMTEMDSESSSSSESSDSDCDKGKVVDMSSLRNKAKPVLEPLQPEATVATLPRIQEDAISCKNTSEALQIALQTSTIFPSMANPGQTLKTVEAVSVVGLPLNRVEVCMGGKCKRSGGALLLDEFQRAMTGFEGSAVACKCMGKCRDGPNVRVVKETDAVMTDSVRTPSKTLCVGVGLQDVETIVTSFFDEECSREGLGSVSY.

The tract at residues 153 to 182 (KAKAMKKMTEMDSESSSSSESSDSDCDKGK) is disordered. Residues Cys-265, Cys-270, Cys-298, and Cys-302 each coordinate [2Fe-2S] cluster.

Belongs to the diacylglycerol acyltransferase family. [2Fe-2S] cluster is required as a cofactor.

It carries out the reaction an acyl-CoA + a 1,2-diacyl-sn-glycerol = a triacyl-sn-glycerol + CoA. It functions in the pathway glycerolipid metabolism; triacylglycerol biosynthesis. Its function is as follows. Involved in triacylglycerol (TAG) biosynthesis. Catalyzes the acylation of the sn-3 hydroxy group of sn-1,2-diacylglycerol using acyl-CoA. May preferentially use linolenoyl-CoA as substrate and to a lesser extent linoleoyl-CoA. May contribute to the active recycling of linoleate and linolenate into TAG when seed oil breakdown is blocked. This is Diacylglycerol O-acyltransferase 3 from Arabidopsis thaliana (Mouse-ear cress).